The primary structure comprises 511 residues: 4,4'-diapophytoene desaturase (4,4'-diapolycopene-forming) (511 aa).

It belongs to the carotenoid/retinoid oxidoreductase family.

It catalyses the reaction 15-cis-4,4'-diapophytoene + 4 FAD + 4 H(+) = all-trans-4,4'-diapolycopene + 4 FADH2. It functions in the pathway carotenoid biosynthesis. Its function is as follows. Involved in the biosynthesis of C30 carotenoids. Catalyzes four successive dehydrogenation reactions that lead to the introduction of four double bonds into 4,4'-diapophytoene (dehydrosqualene) to yield 4,4'-diapolycopene. The protein is 4,4'-diapophytoene desaturase (4,4'-diapolycopene-forming) of Methylomonas sp.